Consider the following 96-residue polypeptide: Protein RnfH (96 aa).

The protein belongs to the UPF0125 (RnfH) family.

The sequence is that of Protein RnfH from Shigella flexneri.